The chain runs to 96 residues: Acylphosphatase (96 aa).

Residues Ala11–Arg96 form the Acylphosphatase-like domain. Residues Arg26 and Asn44 contribute to the active site.

This sequence belongs to the acylphosphatase family.

It carries out the reaction an acyl phosphate + H2O = a carboxylate + phosphate + H(+). The chain is Acylphosphatase (acyP) from Solibacter usitatus (strain Ellin6076).